The following is a 242-amino-acid chain: MADENSTGPGNQPEATLAPEATNAEVTSQAPRRGRGGGGRDGGRGGRDGGRGRRDDRRPRDEDGGEELIEKLVHINRVSKTVKGGKRFGFAALVVVGDGKGRAGFGHGKAREVPEAISKATAAAKKAMIRVPLRDGRTLHHDGRGHFGAGNVTLRSAPAGTGIIAGGPMRAVFESLGVADVVTKSVGTSNPYNMIRATFEALGEQTSPKSVAQRRGKKVSDLIKRGGASDRAAEAEAAAVTE.

Residues M1 to E14 are compositionally biased toward polar residues. Residues M1–G65 are disordered. Positions D41–G65 are enriched in basic and acidic residues. In terms of domain architecture, S5 DRBM spans L68–V131. The interval E204–E242 is disordered. Residues K218–E234 are compositionally biased toward basic and acidic residues.

This sequence belongs to the universal ribosomal protein uS5 family. As to quaternary structure, part of the 30S ribosomal subunit. Contacts proteins S4 and S8.

Its function is as follows. With S4 and S12 plays an important role in translational accuracy. Functionally, located at the back of the 30S subunit body where it stabilizes the conformation of the head with respect to the body. The sequence is that of Small ribosomal subunit protein uS5 from Sphingopyxis alaskensis (strain DSM 13593 / LMG 18877 / RB2256) (Sphingomonas alaskensis).